Reading from the N-terminus, the 762-residue chain is 5-methyltetrahydropteroyltriglutamate--homocysteine methyltransferase (762 aa).

5-methyltetrahydropteroyltri-L-glutamate contacts are provided by residues 17 to 20 (REWK) and lysine 111. Residues 435–437 (IGS) and glutamate 488 each bind L-homocysteine. L-methionine-binding positions include 435–437 (IGS) and glutamate 488. 5-methyltetrahydropteroyltri-L-glutamate contacts are provided by residues 519–520 (RC) and tryptophan 565. Residue aspartate 603 coordinates L-homocysteine. Position 603 (aspartate 603) interacts with L-methionine. Residue glutamate 609 coordinates 5-methyltetrahydropteroyltri-L-glutamate. Positions 645, 647, and 669 each coordinate Zn(2+). Residue histidine 698 is the Proton donor of the active site. Cysteine 730 contributes to the Zn(2+) binding site.

This sequence belongs to the vitamin-B12 independent methionine synthase family. It depends on Zn(2+) as a cofactor.

The catalysed reaction is 5-methyltetrahydropteroyltri-L-glutamate + L-homocysteine = tetrahydropteroyltri-L-glutamate + L-methionine. It functions in the pathway amino-acid biosynthesis; L-methionine biosynthesis via de novo pathway; L-methionine from L-homocysteine (MetE route): step 1/1. Catalyzes the transfer of a methyl group from 5-methyltetrahydrofolate to homocysteine resulting in methionine formation. The polypeptide is 5-methyltetrahydropteroyltriglutamate--homocysteine methyltransferase (Bacillus mycoides (strain KBAB4) (Bacillus weihenstephanensis)).